Consider the following 425-residue polypeptide: Glutamate-1-semialdehyde 2,1-aminomutase (425 aa).

An N6-(pyridoxal phosphate)lysine modification is found at lysine 265.

The protein belongs to the class-III pyridoxal-phosphate-dependent aminotransferase family. HemL subfamily. In terms of assembly, homodimer. Pyridoxal 5'-phosphate is required as a cofactor.

It localises to the cytoplasm. It carries out the reaction (S)-4-amino-5-oxopentanoate = 5-aminolevulinate. Its pathway is porphyrin-containing compound metabolism; protoporphyrin-IX biosynthesis; 5-aminolevulinate from L-glutamyl-tRNA(Glu): step 2/2. The chain is Glutamate-1-semialdehyde 2,1-aminomutase from Laribacter hongkongensis (strain HLHK9).